We begin with the raw amino-acid sequence, 532 residues long: UDP-N-acetylmuramoylalanine--D-glutamate ligase (532 aa).

ATP is bound at residue 124-130; it reads GSKGKSS.

The protein belongs to the MurCDEF family.

The protein localises to the cytoplasm. The catalysed reaction is UDP-N-acetyl-alpha-D-muramoyl-L-alanine + D-glutamate + ATP = UDP-N-acetyl-alpha-D-muramoyl-L-alanyl-D-glutamate + ADP + phosphate + H(+). Its pathway is cell wall biogenesis; peptidoglycan biosynthesis. Cell wall formation. Catalyzes the addition of glutamate to the nucleotide precursor UDP-N-acetylmuramoyl-L-alanine (UMA). The protein is UDP-N-acetylmuramoylalanine--D-glutamate ligase (murD) of Treponema pallidum (strain Nichols).